Consider the following 322-residue polypeptide: MKRIGVFTSGGDAPGMNAAIRAVVRQAHALGVEVIGIRRGYAGMIQGEMVPLGVRDVANIIQRGGTILLTARSQEFLTEEGRAKAYAKLQAAGIEGLVAIGGDGTFRGALCLVEEHGMPVVGVPGTIDNDLYGTDYTIGFDTAVNTALEAIDRIRDTAASHERVFFIEVMGRHAGFIALDVGLAGGAEVIAVPEEPVDPKAVAEVLEASQRRGKKSSIVVVAEGAYPGGAAGLLAAIREHLQVEARVTVLGHIQRGGSPTAKDRILASRLGAAAVEALVGGASGVMVGEVEGEVDLTPLKEAVERRKDINRALLRLSQVLAL.

Residue glycine 11 coordinates ATP. 21–25 (RAVVR) serves as a coordination point for ADP. ATP contacts are provided by residues 72 to 73 (RS) and 102 to 105 (GDGT). Residue aspartate 103 coordinates Mg(2+). Residue 126–128 (TID) coordinates substrate. The Proton acceptor role is filled by aspartate 128. Arginine 155 lines the ADP pocket. Substrate contacts are provided by residues arginine 163 and 170–172 (MGR). ADP-binding positions include 186–188 (GAE), arginine 212, and 214–216 (KKS). Substrate contacts are provided by residues glutamate 223, arginine 246, and 252–255 (HIQR).

This sequence belongs to the phosphofructokinase type A (PFKA) family. ATP-dependent PFK group I subfamily. Prokaryotic clade 'B1' sub-subfamily. In terms of assembly, homotetramer. Requires Mg(2+) as cofactor.

The protein resides in the cytoplasm. The catalysed reaction is beta-D-fructose 6-phosphate + ATP = beta-D-fructose 1,6-bisphosphate + ADP + H(+). It functions in the pathway carbohydrate degradation; glycolysis; D-glyceraldehyde 3-phosphate and glycerone phosphate from D-glucose: step 3/4. Allosterically activated by ADP and other diphosphonucleosides. Allosterically inhibited by phosphoenolpyruvate which induces the dissociation of the active tetramer into an inactive two-subunit forms. Functionally, catalyzes the phosphorylation of D-fructose 6-phosphate to fructose 1,6-bisphosphate by ATP, the first committing step of glycolysis. The protein is ATP-dependent 6-phosphofructokinase 1 of Thermus thermophilus (strain ATCC 27634 / DSM 579 / HB8).